We begin with the raw amino-acid sequence, 89 residues long: U-scoloptoxin(11)-Sm4a (89 aa).

The signal sequence occupies residues 1–17 (MFFKLVLVSAVAIQALS).

The protein belongs to the scoloptoxin-11 family. Post-translationally, contains 3 disulfide bonds. In terms of tissue distribution, expressed by the venom gland.

The protein resides in the secreted. The sequence is that of U-scoloptoxin(11)-Sm4a from Scolopendra morsitans (Tanzanian blue ringleg centipede).